The chain runs to 127 residues: Arginine decarboxylase proenzyme (127 aa).

The Schiff-base intermediate with substrate; via pyruvic acid role is filled by S72. The residue at position 72 (S72) is a Pyruvic acid (Ser); by autocatalysis. The active-site Proton acceptor; for processing activity is the H77. C92 serves as the catalytic Proton donor; for catalytic activity.

It belongs to the prokaryotic AdoMetDC family. Type 1 subfamily. In terms of assembly, heterooctamer of four alpha and four beta chains arranged as a tetramer of alpha/beta heterodimers. Requires pyruvate as cofactor. Post-translationally, is synthesized initially as an inactive proenzyme. Formation of the active enzyme involves a self-maturation process in which the active site pyruvoyl group is generated from an internal serine residue via an autocatalytic post-translational modification. Two non-identical subunits are generated from the proenzyme in this reaction, and the pyruvate is formed at the N-terminus of the alpha chain, which is derived from the carboxyl end of the proenzyme. The post-translation cleavage follows an unusual pathway, termed non-hydrolytic serinolysis, in which the side chain hydroxyl group of the serine supplies its oxygen atom to form the C-terminus of the beta chain, while the remainder of the serine residue undergoes an oxidative deamination to produce ammonia and the pyruvoyl group blocking the N-terminus of the alpha chain.

The catalysed reaction is L-arginine + H(+) = agmatine + CO2. It functions in the pathway amine and polyamine biosynthesis; agmatine biosynthesis; agmatine from L-arginine: step 1/1. In terms of biological role, specifically catalyzes the decarboxylation of L-arginine to agmatine. Has no S-adenosylmethionine decarboxylase (AdoMetDC) activity. This Staphylothermus marinus (strain ATCC 43588 / DSM 3639 / JCM 9404 / F1) protein is Arginine decarboxylase proenzyme.